The sequence spans 219 residues: Ribose-5-phosphate isomerase A (219 aa).

Substrate-binding positions include 28–31 (TGST), 81–84 (DGAD), and 94–97 (KGGG). Glu-103 acts as the Proton acceptor in catalysis. Lys-121 is a substrate binding site.

This sequence belongs to the ribose 5-phosphate isomerase family. In terms of assembly, homodimer.

It catalyses the reaction aldehydo-D-ribose 5-phosphate = D-ribulose 5-phosphate. Its pathway is carbohydrate degradation; pentose phosphate pathway; D-ribose 5-phosphate from D-ribulose 5-phosphate (non-oxidative stage): step 1/1. Functionally, catalyzes the reversible conversion of ribose-5-phosphate to ribulose 5-phosphate. The sequence is that of Ribose-5-phosphate isomerase A from Pectobacterium atrosepticum (strain SCRI 1043 / ATCC BAA-672) (Erwinia carotovora subsp. atroseptica).